We begin with the raw amino-acid sequence, 525 residues long: Cyclic AMP-responsive element-binding protein 3-like protein 2 (525 aa).

Residues 1 to 382 (MEIMESGDPV…SCKAAGTQTG (382 aa)) are Cytoplasmic-facing. Disordered stretches follow at residues 85–104 (LCGD…DDNF), 203–267 (EALQ…QGSG), and 309–338 (NKIS…SSEN). Polar residues-rich tracts occupy residues 90–102 (RPQS…SSDD) and 213–239 (SSHG…QSQA). The bZIP domain maps to 299-362 (ALKKIRRKIK…RTLLQQLQRL (64 aa)). Residues 301–330 (KKIRRKIKNKISAQESRRKKKEYMDSLEKR) are basic motif. Residues 322-332 (EYMDSLEKRVE) are compositionally biased toward basic and acidic residues. The interval 341-362 (LRKKVEVLESTNRTLLQQLQRL) is leucine-zipper. A helical; Signal-anchor for type II membrane protein transmembrane segment spans residues 383–403 (TCLMMVVLCFAVIFGSFTQNL). The Lumenal portion of the chain corresponds to 404–525 (DMYSSSSKTI…ELDRTVNTTS (122 aa)). The short motif at 433–436 (RKLL) is the S1P recognition element. 3 N-linked (GlcNAc...) asparagine glycosylation sites follow: asparagine 490, asparagine 509, and asparagine 522.

This sequence belongs to the bZIP family. ATF subfamily. In terms of assembly, binds DNA as a dimer. In terms of processing, upon ER stress, translocated to the Golgi apparatus, where it is processed by regulated intramembrane proteolysis (RIP) to release the cytosol-facing N-terminal transcription factor domain. The cleavage is performed sequentially by site-1 and site-2 proteases (S1P/mbtps1 and S2P/mbtps2).

It is found in the endoplasmic reticulum membrane. The protein resides in the nucleus. Transcription factor involved in unfolded protein response (UPR). In the absence of endoplasmic reticulum (ER) stress, inserted into ER membranes, with N-terminal DNA-binding and transcription activation domains oriented toward the cytosolic face of the membrane. In response to ER stress, transported to the Golgi, where it is cleaved in a site-specific manner by resident proteases S1P/mbtps1 and S2P/mbtps2. The released N-terminal cytosolic domain is translocated to the nucleus to effect transcription of specific target genes. Plays a critical role in chondrogenesis. May protect neuroblastoma cells from ER stress-induced death. In vitro activates transcription of target genes via direct binding to the CRE site. In Xenopus laevis (African clawed frog), this protein is Cyclic AMP-responsive element-binding protein 3-like protein 2 (creb3l2).